Reading from the N-terminus, the 365-residue chain is MQKPTRPQPKAGVLDIAAYVPGKEHVEGVAKVYKLSSNETPLGPSPHAREAYRHAGEKLELYPDGQALALRQAIAETQGLNISNILCGNGSDELLGLLCQTYLAPGDETIITEHGFAVYKIQTLAAGATPVTVKEKNERIDVDAILAGVTARTKIVFIANPANPTGTYLPFEEVRRLHAGLPQHVLLVLDAAYAEYVRRNDYEAGLELVSSNENVVMMRTFSKIHGLPGLRIGWIYAPLHIIDAMNRIRGPFNMNSAAIAAGAAAIRDRAHVEKSVAYNEKWLAWLTEEFTRLGLRVTPSVTNFLLIHFPDDAAHSADKADEWLSRRGYILRRVGGYGFPNALRMTVGPEEANRGVVAALTEFLK.

Residue K223 is modified to N6-(pyridoxal phosphate)lysine.

The protein belongs to the class-II pyridoxal-phosphate-dependent aminotransferase family. Histidinol-phosphate aminotransferase subfamily. As to quaternary structure, homodimer. It depends on pyridoxal 5'-phosphate as a cofactor.

It carries out the reaction L-histidinol phosphate + 2-oxoglutarate = 3-(imidazol-4-yl)-2-oxopropyl phosphate + L-glutamate. Its pathway is amino-acid biosynthesis; L-histidine biosynthesis; L-histidine from 5-phospho-alpha-D-ribose 1-diphosphate: step 7/9. The sequence is that of Histidinol-phosphate aminotransferase from Brucella melitensis biotype 1 (strain ATCC 23456 / CCUG 17765 / NCTC 10094 / 16M).